We begin with the raw amino-acid sequence, 964 residues long: Glycine dehydrogenase (decarboxylating) (964 aa).

Residues 1-10 show a composition bias toward polar residues; that stretch reads MNSTLQNRNR. The interval 1–25 is disordered; the sequence is MNSTLQNRNRTNLERVSTDPLDTFP. At K713 the chain carries N6-(pyridoxal phosphate)lysine.

The protein belongs to the GcvP family. The glycine cleavage system is composed of four proteins: P, T, L and H. Pyridoxal 5'-phosphate is required as a cofactor.

The catalysed reaction is N(6)-[(R)-lipoyl]-L-lysyl-[glycine-cleavage complex H protein] + glycine + H(+) = N(6)-[(R)-S(8)-aminomethyldihydrolipoyl]-L-lysyl-[glycine-cleavage complex H protein] + CO2. In terms of biological role, the glycine cleavage system catalyzes the degradation of glycine. The P protein binds the alpha-amino group of glycine through its pyridoxal phosphate cofactor; CO(2) is released and the remaining methylamine moiety is then transferred to the lipoamide cofactor of the H protein. The polypeptide is Glycine dehydrogenase (decarboxylating) (Leptospira borgpetersenii serovar Hardjo-bovis (strain JB197)).